The sequence spans 564 residues: Eukaryotic translation initiation factor 3 subunit L (564 aa).

S2 is subject to N-acetylserine. Phosphoserine is present on S21. The PCI domain maps to 331 to 537 (DAIRVFANIL…IHIADTKVAR (207 aa)). An N6-acetyllysine mark is found at K465 and K549.

As to quaternary structure, component of the eukaryotic translation initiation factor 3 (eIF-3) complex, which is composed of 13 subunits: EIF3A, EIF3B, EIF3C, EIF3D, EIF3E, EIF3F, EIF3G, EIF3H, EIF3I, EIF3J, EIF3K, EIF3L and EIF3M. The eIF-3 complex appears to include 3 stable modules: module A is composed of EIF3A, EIF3B, EIF3G and EIF3I; module B is composed of EIF3F, EIF3H, and EIF3M; and module C is composed of EIF3C, EIF3D, EIF3E, EIF3K and EIF3L. EIF3C of module C binds EIF3B of module A and EIF3H of module B, thereby linking the three modules. EIF3J is a labile subunit that binds to the eIF-3 complex via EIF3B. The eIF-3 complex interacts with RPS6KB1 under conditions of nutrient depletion. Mitogenic stimulation leads to binding and activation of a complex composed of MTOR and RPTOR, leading to phosphorylation and release of RPS6KB1 and binding of EIF4B to eIF-3. Interacts with RRN3.

It is found in the cytoplasm. Its function is as follows. Component of the eukaryotic translation initiation factor 3 (eIF-3) complex, which is required for several steps in the initiation of protein synthesis. The eIF-3 complex associates with the 40S ribosome and facilitates the recruitment of eIF-1, eIF-1A, eIF-2:GTP:methionyl-tRNAi and eIF-5 to form the 43S pre-initiation complex (43S PIC). The eIF-3 complex stimulates mRNA recruitment to the 43S PIC and scanning of the mRNA for AUG recognition. The eIF-3 complex is also required for disassembly and recycling of post-termination ribosomal complexes and subsequently prevents premature joining of the 40S and 60S ribosomal subunits prior to initiation. The eIF-3 complex specifically targets and initiates translation of a subset of mRNAs involved in cell proliferation, including cell cycling, differentiation and apoptosis, and uses different modes of RNA stem-loop binding to exert either translational activation or repression. (Microbial infection) In case of FCV infection, plays a role in the ribosomal termination-reinitiation event leading to the translation of VP2. The sequence is that of Eukaryotic translation initiation factor 3 subunit L from Homo sapiens (Human).